The sequence spans 380 residues: Queuine tRNA-ribosyltransferase (380 aa).

The Proton acceptor role is filled by Asp-96. Residues 96–100 (DSGGF), Asp-150, Gln-193, and Gly-220 contribute to the substrate site. Residues 251–257 (GVGAPDS) form an RNA binding region. Asp-270 serves as the catalytic Nucleophile. The segment at 275–279 (TRIAR) is RNA binding; important for wobble base 34 recognition. Zn(2+)-binding residues include Cys-308, Cys-310, Cys-313, and His-339.

Belongs to the queuine tRNA-ribosyltransferase family. Homodimer. Within each dimer, one monomer is responsible for RNA recognition and catalysis, while the other monomer binds to the replacement base PreQ1. The cofactor is Zn(2+).

The enzyme catalyses 7-aminomethyl-7-carbaguanine + guanosine(34) in tRNA = 7-aminomethyl-7-carbaguanosine(34) in tRNA + guanine. It participates in tRNA modification; tRNA-queuosine biosynthesis. Catalyzes the base-exchange of a guanine (G) residue with the queuine precursor 7-aminomethyl-7-deazaguanine (PreQ1) at position 34 (anticodon wobble position) in tRNAs with GU(N) anticodons (tRNA-Asp, -Asn, -His and -Tyr). Catalysis occurs through a double-displacement mechanism. The nucleophile active site attacks the C1' of nucleotide 34 to detach the guanine base from the RNA, forming a covalent enzyme-RNA intermediate. The proton acceptor active site deprotonates the incoming PreQ1, allowing a nucleophilic attack on the C1' of the ribose to form the product. After dissociation, two additional enzymatic reactions on the tRNA convert PreQ1 to queuine (Q), resulting in the hypermodified nucleoside queuosine (7-(((4,5-cis-dihydroxy-2-cyclopenten-1-yl)amino)methyl)-7-deazaguanosine). This chain is Queuine tRNA-ribosyltransferase, found in Streptococcus pyogenes serotype M6 (strain ATCC BAA-946 / MGAS10394).